The primary structure comprises 1125 residues: MKTSKDSSNSNSNNNNNNNNNNNNNNNNNNGLNGTYSSKSLSPPTSPKQMSGNSIISNSTGNLSSGSGSGSSSGGNKKFINRSFNTFIDFIKKPARRNSKAHNTPPPYPEVDTGFGYFLELDSKPPKPFDEKDDPIHNSTGSTDSWEGDLNSSGGGGKQPQQTQQQSSGENLNNSSDRNNNSNENNQIVDDNSNVFNKGVVVQTVPMTEIGLFPVSLMMAQQRAEHPINVEDIESDVQTCSIPNSKPLYSSLGCSTNSSNSGSSISAPNITFQSFGISPVNNNNNNNNNSNNNSNSNSNSNSNSNNNNNNNNNNNNNNNNNNNNNNNNNSTVNSNNSSLNNSPRYLNSSSSPRSMQHLSSKITTTTTTTTTTTTTTSDDNNGNTNNNISNNNNIINNSNNNSNSNNNNNNNINNTNHKFKTMEKYFSSKENFPIPFPKLKDELGVIIENSSNKGYVGGNKGSEDRRKKIEQKKKQVPAPEMKATKEKFIETITDPTTLNSFRSFMENTQSNENLEFFLEVKRFNTIQDQVLLKHTCDDIWRRFFDDLAVTQLCVESSLKKLINNRRENPTHSMFNEVLDLLLDDIVCDAFRNYISSPFNPEWKSEFKKKFTNNTYSTTTQPINNFNNTNNNNNNNCSTPPNNYSSSPIKQSNINNNNNNASSSNIASSSNVNNNNNNSNGSNTSSSHHRERLDNIKGNRERVDSNGKERSIDNKDILSLLESNLSNHSNSSSNSNGKDKDKDKDKNENTTDNSNNNNNSNNNLNNLIIKNNFNNILQSPQIVSKINEIFKDSNNSQLSISITLDNDEDPTIFHLDESDMESLIEEVVKDNISVHTEISYSDVSIHKWIASGSSGRVYNGQYKGKDVAIKVLGPEVCVHFDLNEFKREVALMSIFKHDNLARCLGAGQYDDKYFHLTEYCHNGSLFSYLRDQRNNISFGQRLHFALGIARGMRYLHSMSIIHRDLKSMNILLTKRLKIKIVDFGTSRVANKYNMTTHVGTQAWMAPEIFTSRTYTNKVDVYSYAIILFEIFTRKSAYDENANINIPNMVMKGERPELPKDMQTSISNIIKKCWQQKPSNRPSFIKIVAYLESIIYPSVSNSLGLVASTSFSSSALWSGQILAQPKN.

4 disordered regions span residues 1–77 (MKTS…GGNK), 96–191 (RRNS…IVDD), 276–416 (GISP…NNTN), and 455–480 (YVGG…PAPE). 2 stretches are compositionally biased toward low complexity: residues 7–30 (SSNS…NNNN) and 37–66 (SSKS…LSSG). Residues 121–136 (LDSKPPKPFDEKDDPI) are compositionally biased toward basic and acidic residues. Low complexity-rich tracts occupy residues 159-191 (QPQQ…IVDD) and 281-342 (NNNN…LNNS). A compositionally biased stretch (polar residues) spans 343 to 361 (PRYLNSSSSPRSMQHLSSK). The segment covering 362-416 (ITTTTTTTTTTTTTTSDDNNGNTNNNISNNNNIINNSNNNSNSNNNNNNNINNTN) has biased composition (low complexity). The 117-residue stretch at 487 to 603 (KFIETITDPT…ISSPFNPEWK (117 aa)) folds into the RGS domain. A compositionally biased stretch (low complexity) spans 617–685 (TTTQPINNFN…NNSNGSNTSS (69 aa)). Disordered stretches follow at residues 617-710 (TTTQ…KERS) and 723-762 (NLSN…SNNN). Residues 690–710 (ERLDNIKGNRERVDSNGKERS) are compositionally biased toward basic and acidic residues. Low complexity predominate over residues 723–735 (NLSNHSNSSSNSN). Residues 736–748 (GKDKDKDKDKNEN) are compositionally biased toward basic and acidic residues. The segment covering 749 to 762 (TTDNSNNNNNSNNN) has biased composition (low complexity). The Protein kinase domain occupies 842–1097 (VSIHKWIASG…YLESIIYPSV (256 aa)). ATP contacts are provided by residues 848–856 (IASGSSGRV) and Lys869. Asp963 serves as the catalytic Proton acceptor.

Belongs to the protein kinase superfamily. TKL Ser/Thr protein kinase family. Autophosphorylated.

The protein localises to the cytoplasm. Its subcellular location is the cell membrane. It catalyses the reaction L-seryl-[protein] + ATP = O-phospho-L-seryl-[protein] + ADP + H(+). The catalysed reaction is L-threonyl-[protein] + ATP = O-phospho-L-threonyl-[protein] + ADP + H(+). Up-regulated by cAMP. Serine/threonine kinase involved in negative regulation of chemotaxis. In Dictyostelium discoideum (Social amoeba), this protein is RGS domain-containing serine/threonine-protein kinase A (rckA).